A 106-amino-acid polypeptide reads, in one-letter code: Large ribosomal subunit protein uL24 (106 aa).

Belongs to the universal ribosomal protein uL24 family. Part of the 50S ribosomal subunit.

Its function is as follows. One of two assembly initiator proteins, it binds directly to the 5'-end of the 23S rRNA, where it nucleates assembly of the 50S subunit. Functionally, one of the proteins that surrounds the polypeptide exit tunnel on the outside of the subunit. The protein is Large ribosomal subunit protein uL24 of Thermosipho africanus (strain TCF52B).